A 545-amino-acid chain; its full sequence is CTP synthase (545 aa).

The tract at residues 1 to 266 is amidoligase domain; that stretch reads MTTRYIFVTG…DELVTKRFGI (266 aa). Residue serine 14 participates in CTP binding. Residue serine 14 participates in UTP binding. ATP-binding positions include 15–20 and aspartate 72; that span reads SLGKGI. 2 residues coordinate Mg(2+): aspartate 72 and glutamate 140. Residues 147-149, 187-192, and lysine 223 contribute to the CTP site; these read DIE and KTKPTQ. UTP is bound by residues 187 to 192 and lysine 223; that span reads KTKPTQ. An ATP-binding site is contributed by 239 to 241; that stretch reads KDV. Residues 291–542 form the Glutamine amidotransferase type-1 domain; sequence TIGMVGKYIE…VAAAAAHQKR (252 aa). Residue glycine 352 participates in L-glutamine binding. Catalysis depends on cysteine 379, which acts as the Nucleophile; for glutamine hydrolysis. Residues 380-383, glutamate 403, and arginine 470 contribute to the L-glutamine site; that span reads LGMQ. Active-site residues include histidine 515 and glutamate 517.

This sequence belongs to the CTP synthase family. In terms of assembly, homotetramer.

The enzyme catalyses UTP + L-glutamine + ATP + H2O = CTP + L-glutamate + ADP + phosphate + 2 H(+). It catalyses the reaction L-glutamine + H2O = L-glutamate + NH4(+). It carries out the reaction UTP + NH4(+) + ATP = CTP + ADP + phosphate + 2 H(+). It participates in pyrimidine metabolism; CTP biosynthesis via de novo pathway; CTP from UDP: step 2/2. With respect to regulation, allosterically activated by GTP, when glutamine is the substrate; GTP has no effect on the reaction when ammonia is the substrate. The allosteric effector GTP functions by stabilizing the protein conformation that binds the tetrahedral intermediate(s) formed during glutamine hydrolysis. Inhibited by the product CTP, via allosteric rather than competitive inhibition. Functionally, catalyzes the ATP-dependent amination of UTP to CTP with either L-glutamine or ammonia as the source of nitrogen. Regulates intracellular CTP levels through interactions with the four ribonucleotide triphosphates. This Shewanella woodyi (strain ATCC 51908 / MS32) protein is CTP synthase.